The primary structure comprises 100 residues: Small ribosomal subunit protein uS14c (100 aa).

This sequence belongs to the universal ribosomal protein uS14 family. Part of the 30S ribosomal subunit.

It is found in the plastid. Its subcellular location is the chloroplast. Functionally, binds 16S rRNA, required for the assembly of 30S particles. The chain is Small ribosomal subunit protein uS14c from Physcomitrium patens (Spreading-leaved earth moss).